The chain runs to 49 residues: Protein 19.5 (49 aa).

A signal peptide spans 1–23 (MFRLLLNLLRHRVTYRFLVVLCA).

The protein is Protein 19.5 of Escherichia phage T7 (Bacteriophage T7).